A 487-amino-acid polypeptide reads, in one-letter code: Lysophospholipid acyltransferase 5 (487 aa).

Residue alanine 2 is modified to N-acetylalanine. Transmembrane regions (helical) follow at residues 44–64 (LIFS…YLFY), 67–87 (SYLI…FNFG), 111–131 (ITAV…GYYY), 178–198 (ILGV…GAFL), 236–256 (LGLV…EDYL), and 285–305 (VTCW…FNGF). N-linked (GlcNAc...) asparagine glycosylation occurs at asparagine 308. Residues asparagine 338 and histidine 374 contribute to the active site. A run of 3 helical transmembrane segments spans residues 364–384 (GLSL…LICF), 422–442 (LVQQ…FCLF), and 453–473 (SIYF…PYVY). Positions 484 to 487 (KKRE) match the Di-lysine motif motif.

This sequence belongs to the membrane-bound acyltransferase family.

It localises to the endoplasmic reticulum membrane. It carries out the reaction a 1-acyl-sn-glycero-3-phosphocholine + an acyl-CoA = a 1,2-diacyl-sn-glycero-3-phosphocholine + CoA. The enzyme catalyses a 1-acyl-sn-glycero-3-phosphoethanolamine + an acyl-CoA = a 1,2-diacyl-sn-glycero-3-phosphoethanolamine + CoA. It catalyses the reaction a 1-acyl-sn-glycero-3-phospho-L-serine + an acyl-CoA = a 1,2-diacyl-sn-glycero-3-phospho-L-serine + CoA. The catalysed reaction is (9Z,12Z)-octadecadienoyl-CoA + a 1-acyl-sn-glycero-3-phosphocholine = 1-acyl-2-(9Z,12Z)-octadecadienoyl-sn-glycero-3-phosphocholine + CoA. It carries out the reaction (5Z,8Z,11Z,14Z)-eicosatetraenoyl-CoA + a 1-acyl-sn-glycero-3-phosphocholine = 1-acyl-2-(5Z,8Z,11Z,14Z-eicosatetraenoyl)-sn-glycero-3-phosphocholine + CoA. The enzyme catalyses dodecanoyl-CoA + 1-hexadecanoyl-sn-glycero-3-phosphocholine = 1-hexadecanoyl-2-dodecanoyl-sn-glycero-3-phosphocholine + CoA. It catalyses the reaction octadecanoyl-CoA + 1-hexadecanoyl-sn-glycero-3-phosphocholine = 1-hexadecanoyl-2-octadecanoyl-sn-glycero-3-phosphocholine + CoA. The catalysed reaction is 1-dodecanoyl-sn-glycero-3-phosphocholine + hexadecanoyl-CoA = 1-dodecanoyl-2-hexadecanoyl-sn-glycero-3-phosphocholine + CoA. It carries out the reaction 1-tetradecanoyl-sn-glycero-3-phosphocholine + hexadecanoyl-CoA = 1-tetradecanoyl-2-hexadecanoyl-sn-glycero-3-phosphocholine + CoA. The enzyme catalyses 1-hexadecanoyl-sn-glycero-3-phosphocholine + hexadecanoyl-CoA = 1,2-dihexadecanoyl-sn-glycero-3-phosphocholine + CoA. It catalyses the reaction 1-octadecanoyl-sn-glycero-3-phosphocholine + hexadecanoyl-CoA = 1-octadecanoyl-2-hexadecanoyl-sn-glycero-3-phosphocholine + CoA. The catalysed reaction is 1-(9Z-octadecenoyl)-sn-glycero-3-phosphocholine + hexadecanoyl-CoA = 1-(9Z-octadecenoyl)-2-hexadecanoyl-sn-glycero-3-phosphocholine + CoA. It carries out the reaction (9Z)-hexadecenoyl-CoA + 1-hexadecanoyl-sn-glycero-3-phosphocholine = 1-hexadecanoyl-2-(9Z-hexadecenoyl)-sn-glycero-3-phosphocholine + CoA. The enzyme catalyses 1-hexadecanoyl-sn-glycero-3-phosphocholine + (9Z)-octadecenoyl-CoA = 1-hexadecanoyl-2-(9Z-octadecenoyl)-sn-glycero-3-phosphocholine + CoA. It catalyses the reaction (9Z,12Z)-octadecadienoyl-CoA + 1-hexadecanoyl-sn-glycero-3-phosphocholine = 1-hexadecanoyl-2-(9Z,12Z-octadecadienoyl)-sn-glycero-3-phosphocholine + CoA. The catalysed reaction is 1-dodecanoyl-sn-glycero-3-phosphocholine + (5Z,8Z,11Z,14Z)-eicosatetraenoyl-CoA = 1-dodecanoyl-2-(5Z,8Z,11Z,14Z)-eicosatetraenoyl-sn-glycero-3-phosphocholine + CoA. It carries out the reaction (5Z,8Z,11Z,14Z)-eicosatetraenoyl-CoA + 1-hexadecanoyl-sn-glycero-3-phosphocholine = 1-hexadecanoyl-2-(5Z,8Z,11Z,14Z-eicosatetraenoyl)-sn-glycero-3-phosphocholine + CoA. The enzyme catalyses 1-octadecanoyl-sn-glycero-3-phosphocholine + (5Z,8Z,11Z,14Z)-eicosatetraenoyl-CoA = 1-octadecanoyl-2-(5Z,8Z,11Z,14Z-eicosatetraenoyl)-sn-glycero-3-phosphocholine + CoA. It catalyses the reaction 1-eicosanoyl-sn-glycero-3-phosphocholine + (5Z,8Z,11Z,14Z)-eicosatetraenoyl-CoA = 1-eicosanoyl-2-(5Z,8Z,11Z,14Z)-eicosatetraenoyl-sn-glycero-3-phosphocholine + CoA. The catalysed reaction is 1-(9Z-octadecenoyl)-sn-glycero-3-phosphocholine + (9Z)-octadecenoyl-CoA = 1,2-di-(9Z-octadecenoyl)-sn-glycero-3-phosphocholine + CoA. It carries out the reaction 1-(9Z-octadecenoyl)-sn-glycero-3-phosphocholine + (9Z,12Z)-octadecadienoyl-CoA = 1-(9Z)-octadecenoyl-2-(9Z,12Z)-octadecadienoyl-sn-glycero-3-phosphocholine + CoA. The enzyme catalyses 1-(9Z-octadecenoyl)-sn-glycero-3-phosphocholine + (5Z,8Z,11Z,14Z)-eicosatetraenoyl-CoA = 1-(9Z)-octadecenoyl-2-(5Z,8Z,11Z,14Z)-icosatetraenoyl-sn-glycero-3-phosphocholine + CoA. It catalyses the reaction a 1-acyl-sn-glycero-3-phosphoethanolamine + (9Z,12Z)-octadecadienoyl-CoA = 1-acyl-2-(9Z,12Z)-octadecadienoyl-sn-glycero-3-phosphoethanolamine + CoA. The catalysed reaction is 1-(9Z-octadecenoyl)-sn-glycero-3-phosphoethanolamine + (9Z,12Z)-octadecadienoyl-CoA = 1-(9Z)-octadecenoyl-2-(9Z,12Z)-octadecadienoyl-sn-glycero-3-phosphoethanolamine + CoA. It carries out the reaction 1-(10Z-heptadecenoyl)-sn-glycero-3-phosphoethanolamine + (9Z,12Z)-octadecadienoyl-CoA = 1-(10Z-heptadecenoyl)-2-(9Z,12Z-octadecadienoyl)-sn-glycero-3-phosphoethanolamine + CoA. The enzyme catalyses a 1-acyl-sn-glycero-3-phosphoethanolamine + (5Z,8Z,11Z,14Z)-eicosatetraenoyl-CoA = 1-acyl-2-(5Z,8Z,11Z,14Z)-eicosatetraenoyl-sn-glycero-3-phosphoethanolamine + CoA. It catalyses the reaction 1-hexadecanoyl-sn-glycero-3-phosphoethanolamine + (5Z,8Z,11Z,14Z)-eicosatetraenoyl-CoA = 1-hexadecanoyl-2-(5Z,8Z,11Z,14Z-eicosatetraenoyl)-sn-glycero-3-phosphoethanolamine + CoA. The catalysed reaction is 1-(9Z-octadecenoyl)-sn-glycero-3-phosphoethanolamine + (5Z,8Z,11Z,14Z)-eicosatetraenoyl-CoA = 1-(9Z)-octadecenoyl-2-(5Z,8Z,11Z,14Z)-eicosatetraenoyl-sn-glycero-3-phosphoethanolamine + CoA. It carries out the reaction 1-(10Z-heptadecenoyl)-sn-glycero-3-phosphoethanolamine + (5Z,8Z,11Z,14Z)-eicosatetraenoyl-CoA = 1-(10Z-heptadecenoyl)-2-(5Z,8Z,11Z,14Z-eicosatetraenoyl)-sn-glycero-3-phosphoethanolamine + CoA. The enzyme catalyses a 1-O-(1Z-alkenyl)-sn-glycero-3-phosphoethanolamine + (5Z,8Z,11Z,14Z)-eicosatetraenoyl-CoA = 1-O-(1Z)-alkenyl-2-(5Z,8Z,11Z,14Z)-eicosatetraenoyl-sn-glycero-3-phosphoethanolamine + CoA. It catalyses the reaction a 1-acyl-sn-glycero-3-phospho-L-serine + (9Z,12Z)-octadecadienoyl-CoA = 1-acyl-2-(9Z,12Z-octadecadienoyl)-sn-glycero-3-phospho-L-serine + CoA. The catalysed reaction is a 1-acyl-sn-glycero-3-phospho-L-serine + (5Z,8Z,11Z,14Z)-eicosatetraenoyl-CoA = 1-acyl-2-(5Z,8Z,11Z,14Z-eicosatetraenoyl)-sn-glycero-3-phospho-L-serine + CoA. It carries out the reaction 1-hexadecanoyl-sn-glycero-3-phospho-L-serine + (9Z)-octadecenoyl-CoA = 1-hexadecanoyl-2-(9Z-octadecenoyl)-sn-glycero-3-phospho-L-serine + CoA. The enzyme catalyses 1-(9Z-octadecenoyl)-sn-glycero-3-phospho-L-serine + (9Z)-octadecenoyl-CoA = 1,2-di-(9Z)-octadecenoyl-sn-glycero-3-phospho-L-serine + CoA. It catalyses the reaction 1-hexadecanoyl-sn-glycero-3-phospho-L-serine + (9Z,12Z)-octadecadienoyl-CoA = 1-hexadecanoyl-2-(9Z,12Z-octadecadienoyl)-sn-glycero-3-phospho-L-serine + CoA. The catalysed reaction is 1-(9Z-octadecenoyl)-sn-glycero-3-phospho-L-serine + (9Z,12Z)-octadecadienoyl-CoA = 1-(9Z-octadecenoyl)-2-(9Z,12Z-octadienoyl)-sn-glycero-3-phospho-L-serine + CoA. It carries out the reaction 1-hexadecanoyl-sn-glycero-3-phospho-L-serine + (5Z,8Z,11Z,14Z)-eicosatetraenoyl-CoA = 1-hexadecanoyl-2-(5Z,8Z,11Z,14Z-eicosatetraenoyl)-sn-glycero-3-phospho-L-serine + CoA. The enzyme catalyses 1-(9Z-octadecenoyl)-sn-glycero-3-phospho-L-serine + (5Z,8Z,11Z,14Z)-eicosatetraenoyl-CoA = 1-(9Z-octadecenoyl)-2-(5Z,8Z,11Z,14Z-eicosatetraenoyl)-sn-glycero-3-phospho-L-serine + CoA. It functions in the pathway lipid metabolism; phospholipid metabolism. Functionally, lysophospholipid O-acyltransferase (LPLAT) that catalyzes the reacylation step of the phospholipid remodeling process also known as the Lands cycle. Catalyzes transfer of the fatty acyl chain from fatty acyl-CoA to 1-acyl lysophospholipid to form various classes of phospholipids. Converts 1-acyl lysophosphatidylcholine (LPC) into phosphatidylcholine (PC) (LPCAT activity), 1-acyl lysophosphatidylserine (LPS) into phosphatidylserine (PS) (LPSAT activity) and 1-acyl lysophosphatidylethanolamine (LPE) into phosphatidylethanolamine (PE) (LPEAT activity). Favors polyunsaturated fatty acyl-CoAs as acyl donors compared to saturated fatty acyl-CoAs. Has higher activity for LPC acyl acceptors compared to LPEs and LPSs. Can also transfer the fatty acyl chain from fatty acyl-CoA to 1-O-alkyl lysophospholipid or 1-O-alkenyl lysophospholipid with lower efficiency. Acts as a major LPC O-acyltransferase in liver and intestine. As a component of the liver X receptor/NR1H3 or NR1H2 signaling pathway, mainly catalyzes the incorporation of arachidonate into PCs of endoplasmic reticulum (ER) membranes, increasing membrane dynamics and enabling triacylglycerols transfer to nascent very low-density lipoprotein (VLDL) particles. Promotes processing of sterol regulatory protein SREBF1 in hepatocytes, likely by facilitating the translocation of SREBF1-SCAP complex from ER to the Golgi apparatus. Participates in mechanisms by which the liver X receptor/NR1H3 or NR1H2 signaling pathway counteracts lipid-induced ER stress response and inflammation. Down-regulates hepatic inflammation by limiting arachidonic acid availability for synthesis of inflammatory eicosanoids, such as prostaglandins. In enterocytes, acts as a component of a gut-brain feedback loop that coordinates dietary lipid absorption and food intake. Regulates the abundance of PCs containing linoleate and arachidonate in enterocyte membranes, enabling passive diffusion of fatty acids and cholesterol across the membrane for efficient chylomicron assembly. In the intestinal crypt, acts as a component of dietary-responsive phospholipid-cholesterol axis, regulating the biosynthesis of cholesterol and its mitogenic effects on intestinal stem cells. The sequence is that of Lysophospholipid acyltransferase 5 (Lpcat3) from Rattus norvegicus (Rat).